Here is a 150-residue protein sequence, read N- to C-terminus: Interleukin-17A (150 aa).

The first 17 residues, 1 to 17, serve as a signal peptide directing secretion; sequence MCLMLLLLLNLEATVKA. The disordered stretch occupies residues 54–75; sequence SSRRPSDYLNRSTSPWTLSRNE. Polar residues predominate over residues 62–72; sequence LNRSTSPWTLS. Asparagine 63 is a glycosylation site (N-linked (GlcNAc...) asparagine). Intrachain disulfides connect cysteine 89-cysteine 139 and cysteine 94-cysteine 141.

It belongs to the IL-17 family. In terms of assembly, homodimer. Forms complexes with IL17RA and IL17RC receptors with 2:1 binding stoichiometry: two receptor chains for one interleukin molecule. IL17A homodimer preferentially drives the formation of IL17RA-IL17RC heterodimeric receptor complex. IL17A homodimer adopts an asymmetrical ternary structure with one IL17RA molecule, allowing for high affinity interactions of one IL17A monomer with one IL17RA molecule (via D1 and D2 domains), while disfavoring binding of a second IL17RA molecule on the other IL17A monomer. Heterodimer with IL17F. IL17A-IL17F forms complexes with IL17RA-IL17RC, but with lower affinity when compared to IL17A homodimer. IL17RA and IL17RC chains cannot distinguish between IL17A and IL17F molecules, potentially enabling the formation of topologically distinct complexes.

The protein resides in the secreted. In terms of biological role, effector cytokine of innate and adaptive immune system involved in antimicrobial host defense and maintenance of tissue integrity. Signals via IL17RA-IL17RC heterodimeric receptor complex, triggering homotypic interaction of IL17RA and IL17RC chains with TRAF3IP2 adapter. This leads to downstream TRAF6-mediated activation of NF-kappa-B and MAPkinase pathways ultimately resulting in transcriptional activation of cytokines, chemokines, antimicrobial peptides and matrix metalloproteinases, with potential strong immune inflammation. Plays an important role in connecting T cell-mediated adaptive immunity and acute inflammatory response to destroy extracellular bacteria and fungi. As a signature effector cytokine of T-helper 17 cells (Th17), primarily induces neutrophil activation and recruitment at infection and inflammatory sites. In airway epithelium, mediates neutrophil chemotaxis via induction of CXCL1 and CXCL5 chemokines. In secondary lymphoid organs, contributes to germinal center formation by regulating the chemotactic response of B cells to CXCL12 and CXCL13, enhancing retention of B cells within the germinal centers, B cell somatic hypermutation rate and selection toward plasma cells. Effector cytokine of a subset of gamma-delta T cells that functions as part of an inflammatory circuit downstream IL1B, TLR2 and IL23A-IL12B to promote neutrophil recruitment for efficient bacterial clearance. Effector cytokine of innate immune cells including invariant natural killer cell (iNKT) and group 3 innate lymphoid cells that mediate initial neutrophilic inflammation. Involved in the maintenance of the integrity of epithelial barriers during homeostasis and pathogen infection. Upon acute injury, has a direct role in epithelial barrier formation by regulating OCLN localization and tight junction biogenesis. As part of the mucosal immune response induced by commensal bacteria, enhances host's ability to resist pathogenic bacterial and fungal infections by promoting neutrophil recruitment and antimicrobial peptides release. In synergy with IL17F, mediates the production of antimicrobial beta-defensins DEFB1, DEFB103A, and DEFB104A by mucosal epithelial cells, limiting the entry of microbes through the epithelial barriers. Involved in antiviral host defense through various mechanisms. This is Interleukin-17A (Il17a) from Rattus norvegicus (Rat).